The following is a 343-amino-acid chain: Uroporphyrinogen decarboxylase (343 aa).

Residues 21–25 (RQAGR), Asp71, Tyr148, Ser203, and His316 each bind substrate.

Belongs to the uroporphyrinogen decarboxylase family. In terms of assembly, homodimer.

Its subcellular location is the cytoplasm. The enzyme catalyses uroporphyrinogen III + 4 H(+) = coproporphyrinogen III + 4 CO2. Its pathway is porphyrin-containing compound metabolism; protoporphyrin-IX biosynthesis; coproporphyrinogen-III from 5-aminolevulinate: step 4/4. Catalyzes the decarboxylation of four acetate groups of uroporphyrinogen-III to yield coproporphyrinogen-III. The chain is Uroporphyrinogen decarboxylase from Campylobacter fetus subsp. fetus (strain 82-40).